Reading from the N-terminus, the 349-residue chain is tRNA pseudouridine synthase D (349 aa).

A substrate-binding site is contributed by Phe27. Asp80 (nucleophile) is an active-site residue. Substrate is bound at residue Asn129. In terms of domain architecture, TRUD spans 155–303 (GVPNYFGAQR…VEASRRAMLL (149 aa)). Position 329 (Phe329) interacts with substrate.

It belongs to the pseudouridine synthase TruD family.

The catalysed reaction is uridine(13) in tRNA = pseudouridine(13) in tRNA. Responsible for synthesis of pseudouridine from uracil-13 in transfer RNAs. This Salmonella typhi protein is tRNA pseudouridine synthase D.